The sequence spans 884 residues: Protein translocase subunit SecA (884 aa).

ATP is bound by residues Gln-83, Gly-101–Thr-105, and Asp-491.

This sequence belongs to the SecA family.

Its subcellular location is the plastid. It localises to the chloroplast stroma. The protein resides in the chloroplast thylakoid membrane. It carries out the reaction ATP + H2O + cellular proteinSide 1 = ADP + phosphate + cellular proteinSide 2.. In terms of biological role, has a central role in coupling the hydrolysis of ATP to the transfer of proteins across the thylakoid membrane. This chain is Protein translocase subunit SecA, found in Pyropia yezoensis (Susabi-nori).